Consider the following 410-residue polypeptide: 3-phosphoshikimate 1-carboxyvinyltransferase (410 aa).

The 3-phosphoshikimate site is built by K20, S21, and R25. K20 is a phosphoenolpyruvate binding site. R115 contributes to the phosphoenolpyruvate binding site. Positions 157, 158, 159, 183, 293, and 320 each coordinate 3-phosphoshikimate. Q159 is a phosphoenolpyruvate binding site. Residue D293 is the Proton acceptor of the active site. R324, R365, and K391 together coordinate phosphoenolpyruvate.

Belongs to the EPSP synthase family. Monomer.

The protein localises to the cytoplasm. It carries out the reaction 3-phosphoshikimate + phosphoenolpyruvate = 5-O-(1-carboxyvinyl)-3-phosphoshikimate + phosphate. Its pathway is metabolic intermediate biosynthesis; chorismate biosynthesis. In terms of biological role, catalyzes the transfer of the enolpyruvyl moiety of phosphoenolpyruvate (PEP) to the 5-hydroxyl of shikimate-3-phosphate (S3P) to produce enolpyruvyl shikimate-3-phosphate and inorganic phosphate. This Thermoplasma acidophilum (strain ATCC 25905 / DSM 1728 / JCM 9062 / NBRC 15155 / AMRC-C165) protein is 3-phosphoshikimate 1-carboxyvinyltransferase.